The chain runs to 129 residues: GM1b/asialo-GM1 oligosaccharide-binding R-type lectin (129 aa).

A carbohydrate-binding positions include 21–23, 26–28, Phe-32, and 37–40; these read FYN, RKD, and YDDQ.

In terms of assembly, homodimer. Highest expression in the outer part of the mantle rim. Highly expressed in gills, with a much lower expression in the digestive gland and posterior adductor muscle. Scarcely detectable in foot.

With respect to regulation, hemagglutination activity requires divalent cations such as Ca(2+). Hemagglutination activity is weakly inhibited by monosaccharides such as D-Gal (25 mM), D-GalNAc (25 mM) and D-Fuc (25 mM) and by disaccharides such as melibiose (25 mM) and lactose (25 mM). Hemagglutination activity is inhibited by bovine submaxillary mucin, but not by porcine stomach mucin or fetuin. Its function is as follows. Galbeta1-3GalNAcbeta1-4Galbeta1-4Glc oligosaccharide-binding lectin. Binds strongly to the oligosaccharides of ganglioside GM1b and to a lesser extent its precursor asialo-GM1. Binds weakly to asialo-GM2 oligosaccharide and to the glycan moiety of globo-series stage-specific embryonal antigen 4 (SSEA-4) hexaose. Binds galactose, N-acetylgalactose and lactose. Does not bind GM1. Does not bind to Gal-beta1,3-GalNAc (Thomsen-Friedenreich antigen), the oligosaccharide of GM1a ganglioside or SSEA-4 tetraose. Does not bind to N-glycans, O-glycans or glycosaminoglycans of glycoproteins. Does not bind Lewis glycans, derivatives of lactose or N-acetyllactosamine or blood group (ABH-type) oligosaccharides. Does not bind glucose. Has hemagglutination activity towards rabbit erythrocytes. Displays cytotoxic effects against various cultured cell lines including human breast (MCF-7), cervical (HeLa) and colon cancer (Caco2) cell lines, as well as dog kidney (MDCK) cell line that express asialo-GM1 oligosaccharide at their cell surface. Shows dose- and time-dependent activation of MKK3/6, ERK1/2 and p38 MAPK, as well as caspase-3/9 in HeLa cervical cancer cells. No cytotoxic effect on BT474 human breast cancer cell line. May be involved in recognition of glycans found on parasitic or symbiotic microorganisms. The sequence is that of GM1b/asialo-GM1 oligosaccharide-binding R-type lectin from Mytilisepta virgata (Purplish bifurcate mussel).